Reading from the N-terminus, the 151-residue chain is Cell division protein SepF (151 aa).

The span at 17-29 (DNEDDYQDQEDEQ) shows a compositional bias: acidic residues. The disordered stretch occupies residues 17–42 (DNEDDYQDQEDEQAQQPAPEQPVDNH).

This sequence belongs to the SepF family. In terms of assembly, homodimer. Interacts with FtsZ.

Its subcellular location is the cytoplasm. Functionally, cell division protein that is part of the divisome complex and is recruited early to the Z-ring. Probably stimulates Z-ring formation, perhaps through the cross-linking of FtsZ protofilaments. Its function overlaps with FtsA. The sequence is that of Cell division protein SepF from Lacticaseibacillus casei (strain BL23) (Lactobacillus casei).